The primary structure comprises 240 residues: Uridylate kinase (240 aa).

13-16 lines the ATP pocket; that stretch reads KLSG. The interval 21–26 is involved in allosteric activation by GTP; that stretch reads GDDGFG. Gly55 contributes to the UMP binding site. ATP-binding residues include Gly56 and Arg60. UMP is bound by residues Asp75 and 136-143; that span reads IGNPYFST. 3 residues coordinate ATP: Asn164, Tyr170, and Asp173.

Belongs to the UMP kinase family. In terms of assembly, homohexamer.

The protein resides in the cytoplasm. It catalyses the reaction UMP + ATP = UDP + ADP. Its pathway is pyrimidine metabolism; CTP biosynthesis via de novo pathway; UDP from UMP (UMPK route): step 1/1. With respect to regulation, allosterically activated by GTP. Inhibited by UTP. Functionally, catalyzes the reversible phosphorylation of UMP to UDP. This chain is Uridylate kinase, found in Staphylococcus saprophyticus subsp. saprophyticus (strain ATCC 15305 / DSM 20229 / NCIMB 8711 / NCTC 7292 / S-41).